Reading from the N-terminus, the 203-residue chain is Thymidylate kinase (203 aa).

Residue 14–21 participates in ATP binding; sequence GGEGIGKS.

It belongs to the thymidylate kinase family.

It carries out the reaction dTMP + ATP = dTDP + ADP. Functionally, phosphorylation of dTMP to form dTDP in both de novo and salvage pathways of dTTP synthesis. The chain is Thymidylate kinase from Rickettsia conorii (strain ATCC VR-613 / Malish 7).